A 313-amino-acid chain; its full sequence is E3 ubiquitin-protein ligase RNF126 (313 aa).

Ala2 bears the N-acetylalanine mark. Ser5 is subject to Phosphoserine. Residues 5–101 (SPQPGRYFCH…FEIPTFPPGA (97 aa)) form a required for interaction with BAG6 region. Zn(2+) is bound by residues Cys13, Cys16, Cys29, and Cys32. A C4-type zinc finger spans residues 13–32 (CHCCSVEIVPRLPDYICPRC). Disordered regions lie at residues 42-64 (EETRSAENGSAPSTASADQSRQQ) and 96-128 (TFPPGAQADDSRDPESRREREQHSRHRYGARQP). Over residues 47 to 64 (AENGSAPSTASADQSRQQ) the composition is skewed to polar residues. The span at 104–117 (DDSRDPESRREREQ) shows a compositional bias: basic and acidic residues. The segment covering 118–128 (HSRHRYGARQP) has biased composition (basic residues). Residues 203-306 (TGPPPADKEK…SSSSSSSPGN (104 aa)) form a sufficient for interaction with AICDA region. Residues 232–273 (CPVCKDDYGLGEHVRQLPCNHLFHDGCIVPWLEQHDSCPVCR) form an RING-type zinc finger. The interval 280–313 (NTATDPPGLAGVSFSSSSSSSSSSPGNENPASSS) is disordered. Residues 292 to 313 (SFSSSSSSSSSSPGNENPASSS) are compositionally biased toward low complexity.

Interacts with CCDC50, EGFR, FLT3 and SCAMP3. Interacts with BAG6 (via ubiquitin-like domain); required for BAG6-dependent ubiquitination of proteins mislocalized to the cytosol. Interacts with CDKN1A. Interacts with AICDA. Post-translationally, ubiquitinated. May undergo autoubiquitination.

It is found in the cytoplasm. It localises to the nucleus. The catalysed reaction is S-ubiquitinyl-[E2 ubiquitin-conjugating enzyme]-L-cysteine + [acceptor protein]-L-lysine = [E2 ubiquitin-conjugating enzyme]-L-cysteine + N(6)-ubiquitinyl-[acceptor protein]-L-lysine.. It functions in the pathway protein modification; protein ubiquitination. In terms of biological role, E3 ubiquitin-protein ligase that mediates ubiquitination oF target proteins. Depending on the associated E2 ligase, mediates 'Lys-27'-, 'Lys-29'-, 'Lys-48'- and/or 'Lys-63'-linked polyubiquitination of substrates. Part of a BAG6-dependent quality control process ensuring that proteins of the secretory pathway that are mislocalized to the cytosol are degraded by the proteasome. Probably acts by providing the ubiquitin ligase activity associated with the BAG6 complex and be responsible for ubiquitination of the hydrophobic mislocalized proteins and their targeting to the proteasome. May also play a role in the endosomal recycling of IGF2R, the cation-independent mannose-6-phosphate receptor. May play a role in the endosomal sorting and degradation of several membrane receptors including EGFR, FLT3, MET and CXCR4, by mediating their ubiquitination. By ubiquitinating CDKN1A/p21 and targeting it for degradation, may also promote cell proliferation. May monoubiquitinate AICDA. Acts as a regulator of DNA repair by mediating 'Lys-27'- and 'Lys-29'-linked polyubiquitination of MRE11, thereby promoting the exonuclease activity of MRE11. This Bos taurus (Bovine) protein is E3 ubiquitin-protein ligase RNF126.